The sequence spans 4965 residues: Auxin transport protein BIG (4965 aa).

3 consecutive transmembrane segments (helical) span residues 289-309, 646-666, and 772-792; these read SDIC…IFSP, ACLA…AYEV, and LFLI…YEGL. A disordered region spans residues 1383-1425; that stretch reads TNQESNSTVDCDASSGEEDEDDGTSDGELVSIDRDEEEDGNSE. The segment covering 1397–1407 has biased composition (acidic residues); sequence SGEEDEDDGTS. Residues 1431-1502 form a UBR-type zinc finger; it reads KVCTFTSSGS…RGSSCQCLKP (72 aa). The segment at 2437–2456 is disordered; the sequence is DDAPDNHAKASAASNSTTGN. Positions 2445 to 2456 are enriched in low complexity; that stretch reads KASAASNSTTGN. Residues 2469-2528 form a ZZ-type zinc finger; that stretch reads SVQYCCDGCSTVPILRRRWHCNICPDFDLCETCYEILDADRLPAPHSRDHPMSAIPIELD. 8 residues coordinate Zn(2+): Cys-2474, Cys-2477, Cys-2489, Cys-2492, Cys-2498, Cys-2501, His-2514, and His-2518. The tract at residues 2997 to 3037 is disordered; that stretch reads NAQKTESGDIGSSTRTGSQSSDSKKKRKGDDSSEGSSEKSC. Positions 3007–3017 are enriched in low complexity; sequence GSSTRTGSQSS. Positions 3024–3037 are enriched in basic and acidic residues; it reads KGDDSSEGSSEKSC. The MYND-type; degenerate zinc-finger motif lies at 3319 to 3359; the sequence is CPRCSRSVTDKHGICSNCHENAYQCRQCRNINYENLDSFLC. Residues 3672-3721 are disordered; it reads PKSDSGEKEPGMGKSSLMQAKNDDTVGHSVTNLSTSKTQSELSGKIPDGS. The segment covering 3699–3713 has biased composition (polar residues); sequence HSVTNLSTSKTQSEL. Residues 4433 to 4963 are UBR4 E3 catalytic module; the sequence is PSIPLILSML…DFVRAIIHGA (531 aa). The segment at 4562–4681 adopts a HemiRING-type zinc-finger fold; it reads GLACMVCREG…WDQLNSLGRA (120 aa). Cys-4565, Cys-4568, His-4615, and Cys-4618 together coordinate Zn(2+). In terms of domain architecture, UZI spans 4684–4963; it reads SRLRLLTYDI…DFVRAIIHGA (280 aa). Over residues 4753-4770 the composition is skewed to low complexity; it reads SSSPSTPESPVRLSALSG. Disordered stretches follow at residues 4753–4778 and 4822–4846; these read SSSP…SGSS and STLK…ADSN. Over residues 4824 to 4845 the composition is skewed to polar residues; that stretch reads LKLSADTSSSAVRSDEGSSADS.

The protein belongs to the UBR4 family.

The protein localises to the membrane. Its function is as follows. Required for auxin efflux and polar auxin transport (PAT) influencing auxin-mediated developmental responses (e.g. cell elongation, apical dominance, lateral root production, inflorescence architecture, general growth and development). This chain is Auxin transport protein BIG, found in Oryza sativa subsp. japonica (Rice).